The chain runs to 354 residues: Variable large protein 15/16 (354 aa).

The first 18 residues, Met1–Ser18, serve as a signal peptide directing secretion. Cys19 carries the N-palmitoyl cysteine lipid modification. Cys19 is lipidated: S-diacylglycerol cysteine. Positions Glu333–Asn354 are disordered. The span at Glu338 to Asn354 shows a compositional bias: polar residues.

It belongs to the variable large protein (Vlp) family. Delta subfamily.

The protein localises to the cell outer membrane. Its function is as follows. The Vlp and Vsp proteins are antigenically distinct proteins, only one vlp or vsp gene is transcriptionally active at any one time. Switching between these genes is a mechanism of host immune response evasion. The protein is Variable large protein 15/16 of Borrelia hermsii.